A 238-amino-acid chain; its full sequence is MSDKKRVLVKFSGEALAGDSGFGIDTAILKFIADEIKELVTNGTEVCIVIGGGNIIRGVSAAKDGIIRRTSGDHMGMLATVINSIAMREALERGGLDVRVQSAIKMEAICETFIVGRANRHLEKGRVVIFAAGTGNPFFTTDTAATLRAIEIGSDMIIKATKVDGVYDKDPNKFKDAKLLKSLSYEKAMSDDIKVMDDTAIALAKDNSLPILVCNMFKQGNLLKIISEDAKALYSIVK.

10 to 13 contacts ATP; that stretch reads KFSG. The involved in allosteric activation by GTP stretch occupies residues 18 to 23; it reads GDSGFG. G52 contacts UMP. Positions 53 and 57 each coordinate ATP. UMP is bound by residues D73 and 134-141; that span reads TGNPFFTT. ATP is bound by residues T161, Y167, and D170.

This sequence belongs to the UMP kinase family. In terms of assembly, homohexamer.

The protein resides in the cytoplasm. It carries out the reaction UMP + ATP = UDP + ADP. It functions in the pathway pyrimidine metabolism; CTP biosynthesis via de novo pathway; UDP from UMP (UMPK route): step 1/1. With respect to regulation, allosterically activated by GTP. Inhibited by UTP. Functionally, catalyzes the reversible phosphorylation of UMP to UDP. This is Uridylate kinase from Campylobacter curvus (strain 525.92).